The sequence spans 73 residues: Conotoxin CnIIIG (73 aa).

The N-terminal stretch at 1–19 (MSKLGVLLTICLLLLPLTA) is a signal peptide. The propeptide occupies 20–48 (LPMDEDQPADQPADRMQDDISSEQYPLFD). At Q51 the chain carries Pyrrolidone carboxylic acid. 3 disulfides stabilise this stretch: C53/C72, C54/C70, and C60/C73.

Belongs to the conotoxin M superfamily. As to expression, expressed by the venom duct.

Its subcellular location is the secreted. Shows a paralytic effect in fish. In Conus consors (Singed cone), this protein is Conotoxin CnIIIG.